Consider the following 150-residue polypeptide: UPF0735 ACT domain-containing protein Csac_0995 (150 aa).

In terms of domain architecture, ACT spans 72 to 147; it reads TLALVLQDVP…GVKKIEILGR (76 aa).

Belongs to the UPF0735 family.

In Caldicellulosiruptor saccharolyticus (strain ATCC 43494 / DSM 8903 / Tp8T 6331), this protein is UPF0735 ACT domain-containing protein Csac_0995.